The chain runs to 37 residues: Cytochrome b6-f complex subunit 5 (37 aa).

A helical transmembrane segment spans residues 5 to 25 (LLSGIILGLIPVTLSGLLVAA).

The protein belongs to the PetG family. As to quaternary structure, the 4 large subunits of the cytochrome b6-f complex are cytochrome b6, subunit IV (17 kDa polypeptide, PetD), cytochrome f and the Rieske protein, while the 4 small subunits are PetG, PetL, PetM and PetN. The complex functions as a dimer.

The protein localises to the plastid. It is found in the chloroplast thylakoid membrane. Component of the cytochrome b6-f complex, which mediates electron transfer between photosystem II (PSII) and photosystem I (PSI), cyclic electron flow around PSI, and state transitions. PetG is required for either the stability or assembly of the cytochrome b6-f complex. The chain is Cytochrome b6-f complex subunit 5 from Porphyra purpurea (Red seaweed).